The chain runs to 235 residues: Purine nucleoside phosphorylase DeoD-type (235 aa).

A purine D-ribonucleoside is bound at residue histidine 4. Residues glycine 20, arginine 24, arginine 43, and 87–90 (RVGT) contribute to the phosphate site. Residues glutamate 162, 179 to 181 (EME), and 203 to 204 (SD) contribute to the a purine D-ribonucleoside site. Aspartate 204 acts as the Proton donor in catalysis.

It belongs to the PNP/UDP phosphorylase family. As to quaternary structure, homohexamer; trimer of homodimers.

It catalyses the reaction a purine D-ribonucleoside + phosphate = a purine nucleobase + alpha-D-ribose 1-phosphate. The catalysed reaction is a purine 2'-deoxy-D-ribonucleoside + phosphate = a purine nucleobase + 2-deoxy-alpha-D-ribose 1-phosphate. Functionally, catalyzes the reversible phosphorolytic breakdown of the N-glycosidic bond in the beta-(deoxy)ribonucleoside molecules, with the formation of the corresponding free purine bases and pentose-1-phosphate. The sequence is that of Purine nucleoside phosphorylase DeoD-type from Bacillus cereus (strain ATCC 14579 / DSM 31 / CCUG 7414 / JCM 2152 / NBRC 15305 / NCIMB 9373 / NCTC 2599 / NRRL B-3711).